A 209-amino-acid chain; its full sequence is Ribosomal RNA large subunit methyltransferase E (209 aa).

5 residues coordinate S-adenosyl-L-methionine: glycine 63, tryptophan 65, aspartate 83, aspartate 99, and aspartate 124. Lysine 164 serves as the catalytic Proton acceptor.

It belongs to the class I-like SAM-binding methyltransferase superfamily. RNA methyltransferase RlmE family.

It is found in the cytoplasm. The catalysed reaction is uridine(2552) in 23S rRNA + S-adenosyl-L-methionine = 2'-O-methyluridine(2552) in 23S rRNA + S-adenosyl-L-homocysteine + H(+). Functionally, specifically methylates the uridine in position 2552 of 23S rRNA at the 2'-O position of the ribose in the fully assembled 50S ribosomal subunit. In Vibrio campbellii (strain ATCC BAA-1116), this protein is Ribosomal RNA large subunit methyltransferase E.